Here is a 260-residue protein sequence, read N- to C-terminus: Snake venom serine proteinase 4a (260 aa).

The N-terminal stretch at 1–18 (MVLIRVLANLLILQLSYA) is a signal peptide. Residues 19–24 (QMSSEL) constitute a propeptide that is removed on maturation. A Peptidase S1 domain is found at 25 to 251 (VTGGDECNRN…HLDWIQRIIA (227 aa)). 6 disulfides stabilise this stretch: Cys-31-Cys-163, Cys-50-Cys-66, Cys-98-Cys-258, Cys-142-Cys-212, Cys-174-Cys-191, and Cys-202-Cys-227. The active-site Charge relay system is His-65. A glycan (N-linked (GlcNAc...) asparagine) is linked at Asn-103. Asp-110 acts as the Charge relay system in catalysis. The active-site Charge relay system is the Ser-206.

Belongs to the peptidase S1 family. Snake venom subfamily. Monomer. Expressed by the venom gland.

It localises to the secreted. Functionally, snake venom serine protease that may act in the hemostasis system of the prey. The protein is Snake venom serine proteinase 4a of Crotalus adamanteus (Eastern diamondback rattlesnake).